Consider the following 152-residue polypeptide: Gamma-glutamylaminecyclotransferase C (152 aa).

Residue 9–12 (YGSL) coordinates substrate. Catalysis depends on Glu-84, which acts as the Proton acceptor.

It belongs to the gamma-glutamylcyclotransferase family.

The catalysed reaction is epsilon-(gamma-L-glutamyl)-L-lysine = 5-oxo-L-proline + L-lysine. Functionally, may contribute to degradation of proteins cross-linked by transglutaminases by degrading the cross-link between a lysine and a glutamic acid residue. Catalyzes the formation of 5-oxo-L-proline from L-gamma-glutamyl-L-epsilon-lysine. This is Gamma-glutamylaminecyclotransferase C (ggact.3) from Danio rerio (Zebrafish).